The sequence spans 606 residues: Aspartate--tRNA(Asp/Asn) ligase (606 aa).

Glutamate 196 contributes to the L-aspartate binding site. The tract at residues glutamine 220 to lysine 223 is aspartate. Residue arginine 242 participates in L-aspartate binding. ATP is bound by residues arginine 242–glutamate 244 and glutamine 251. Histidine 465 serves as a coordination point for L-aspartate. Glutamate 499 provides a ligand contact to ATP. Arginine 506 is a binding site for L-aspartate. An ATP-binding site is contributed by glycine 551–arginine 554.

It belongs to the class-II aminoacyl-tRNA synthetase family. Type 1 subfamily. As to quaternary structure, homodimer.

It is found in the cytoplasm. The catalysed reaction is tRNA(Asx) + L-aspartate + ATP = L-aspartyl-tRNA(Asx) + AMP + diphosphate. Functionally, aspartyl-tRNA synthetase with relaxed tRNA specificity since it is able to aspartylate not only its cognate tRNA(Asp) but also tRNA(Asn). Reaction proceeds in two steps: L-aspartate is first activated by ATP to form Asp-AMP and then transferred to the acceptor end of tRNA(Asp/Asn). The protein is Aspartate--tRNA(Asp/Asn) ligase of Oleidesulfovibrio alaskensis (strain ATCC BAA-1058 / DSM 17464 / G20) (Desulfovibrio alaskensis).